Here is a 336-residue protein sequence, read N- to C-terminus: Peroxidase 72 (336 aa).

The first 23 residues, 1–23 (MAKSLNILIAALSLIAFSPFCLC), serve as a signal peptide directing secretion. Cystine bridges form between C42/C122, C75/C80, C128/C329, and C207/C239. The active-site Proton acceptor is H73. The Ca(2+) site is built by D74, V77, G79, D81, and S83. P170 provides a ligand contact to substrate. N173 carries an N-linked (GlcNAc...) asparagine glycan. Heme b is bound at residue H200. T201 contributes to the Ca(2+) binding site. N-linked (GlcNAc...) asparagine glycosylation is present at N216. Ca(2+)-binding residues include D252, T255, and D260.

Belongs to the peroxidase family. Classical plant (class III) peroxidase subfamily. Requires heme b as cofactor. Ca(2+) serves as cofactor. As to expression, slightly expressed in roots.

Its subcellular location is the secreted. The catalysed reaction is 2 a phenolic donor + H2O2 = 2 a phenolic radical donor + 2 H2O. In terms of biological role, removal of H(2)O(2), oxidation of toxic reductants, biosynthesis and degradation of lignin, suberization, auxin catabolism, response to environmental stresses such as wounding, pathogen attack and oxidative stress. These functions might be dependent on each isozyme/isoform in each plant tissue. The polypeptide is Peroxidase 72 (PER72) (Arabidopsis thaliana (Mouse-ear cress)).